Here is a 446-residue protein sequence, read N- to C-terminus: Glutamyl-tRNA reductase (446 aa).

Substrate-binding positions include 49–52, serine 107, 112–114, and glutamine 118; these read TCNR and EPQ. Cysteine 50 acts as the Nucleophile in catalysis. 187-192 contributes to the NADP(+) binding site; the sequence is GAGETI. The tract at residues 417–446 is disordered; it reads NANEDTRESVDKEQTGTTQGAARGDQRSTG. The span at 420–430 shows a compositional bias: basic and acidic residues; sequence EDTRESVDKEQ.

Belongs to the glutamyl-tRNA reductase family. Homodimer.

It catalyses the reaction (S)-4-amino-5-oxopentanoate + tRNA(Glu) + NADP(+) = L-glutamyl-tRNA(Glu) + NADPH + H(+). Its pathway is porphyrin-containing compound metabolism; protoporphyrin-IX biosynthesis; 5-aminolevulinate from L-glutamyl-tRNA(Glu): step 1/2. Its function is as follows. Catalyzes the NADPH-dependent reduction of glutamyl-tRNA(Glu) to glutamate 1-semialdehyde (GSA). This chain is Glutamyl-tRNA reductase, found in Alkalilimnicola ehrlichii (strain ATCC BAA-1101 / DSM 17681 / MLHE-1).